The chain runs to 185 residues: Elongation factor P 1 (185 aa).

It belongs to the elongation factor P family.

The protein localises to the cytoplasm. Its pathway is protein biosynthesis; polypeptide chain elongation. Involved in peptide bond synthesis. Stimulates efficient translation and peptide-bond synthesis on native or reconstituted 70S ribosomes in vitro. Probably functions indirectly by altering the affinity of the ribosome for aminoacyl-tRNA, thus increasing their reactivity as acceptors for peptidyl transferase. This Chlamydia caviae (strain ATCC VR-813 / DSM 19441 / 03DC25 / GPIC) (Chlamydophila caviae) protein is Elongation factor P 1 (efp1).